Reading from the N-terminus, the 294-residue chain is Ribosomal protein L11 methyltransferase (294 aa).

4 residues coordinate S-adenosyl-L-methionine: Thr-146, Gly-167, Asp-189, and Asn-231.

This sequence belongs to the methyltransferase superfamily. PrmA family.

The protein resides in the cytoplasm. It catalyses the reaction L-lysyl-[protein] + 3 S-adenosyl-L-methionine = N(6),N(6),N(6)-trimethyl-L-lysyl-[protein] + 3 S-adenosyl-L-homocysteine + 3 H(+). Functionally, methylates ribosomal protein L11. In Photobacterium profundum (strain SS9), this protein is Ribosomal protein L11 methyltransferase.